Reading from the N-terminus, the 664-residue chain is ATP-dependent RNA helicase MSS116, mitochondrial (664 aa).

Residues 1–26 (MLTSILIKGRTPVLASRNLLAALSNC) constitute a mitochondrion transit peptide. The disordered stretch occupies residues 42–79 (NRDQRNFGRNQRNNNSNRYRNSRFNSRPRTRSREDDDE). Residues 48-68 (FGRNQRNNNSNRYRNSRFNSR) are compositionally biased toward low complexity. The Q motif signature appears at 106 to 134 (SLLEEGVLDKEIHKAITRMEFPGLTPVQQ). The 188-residue stretch at 139-326 (PILSSEDHDV…NNIMNKKECL (188 aa)) folds into the Helicase ATP-binding domain. Position 152-159 (152-159 (AKTGTGKT)) interacts with ATP. Positions 267–270 (DEAD) match the DEAD box motif. The Helicase C-terminal domain occupies 355-512 (SIFAAVEHIK…EKYEPSEEIK (158 aa)). The tract at residues 602 to 664 (GNNKSYDYDD…NYSSRNSNIY (63 aa)) is disordered. A compositionally biased stretch (basic and acidic residues) spans 628–638 (QNRDYDDEPFR). A compositionally biased stretch (low complexity) spans 639 to 649 (RSNNNRRSFSR). A compositionally biased stretch (polar residues) spans 653-664 (KNNYSSRNSNIY).

The protein belongs to the DEAD box helicase family. DDX18/HAS1 subfamily.

The protein localises to the mitochondrion matrix. The catalysed reaction is ATP + H2O = ADP + phosphate + H(+). ATP-dependent RNA helicase required for mitochondrial splicing of group I and II introns. Specifically involved in the ATP-dependent splicing of the bl1 intron of COB. Also required for efficient mitochondrial translation. The sequence is that of ATP-dependent RNA helicase MSS116, mitochondrial (MSS116) from Saccharomyces cerevisiae (strain ATCC 204508 / S288c) (Baker's yeast).